A 180-amino-acid polypeptide reads, in one-letter code: MIIYLHGFDSNSPGNHEKVLQLQFIDSDVRLISYSTRHPKHDMQHLLKEVDKMLQLNVDDRPLICGVGLGGYWAERIGFLCDIRQVVFNPNLFPYENMEGKIDRPEEYADIATKCVTNFREKNRDRCLVILSRHDEALDSHRSAKELHHFYEIVWDEEQTHKFKNISPHLQRIKAFKTLG.

It belongs to the UPF0227 family.

The sequence is that of UPF0227 protein CKO_01948 from Citrobacter koseri (strain ATCC BAA-895 / CDC 4225-83 / SGSC4696).